The primary structure comprises 1354 residues: Ubiquitin carboxyl-terminal hydrolase 47 (1354 aa).

Polar residues predominate over residues 114–133 (EQPQLASDESGTADSSGLDD). Residues 114–139 (EQPQLASDESGTADSSGLDDSTQEKF) form a disordered region. The USP domain maps to 174–549 (VGLVNQAMTC…NAYMLMYRLK (376 aa)). Catalysis depends on C183, which acts as the Nucleophile. The tract at residues 408 to 438 (DVEDEKSPQTDSCTDSGAENEGSCHSDQMSN) is disordered. The span at 416–438 (QTDSCTDSGAENEGSCHSDQMSN) shows a compositional bias: polar residues. The active-site Proton acceptor is H488. Polar residues predominate over residues 863–882 (LSLQQHQDGGNGDSSKSTEG). Disordered stretches follow at residues 863 to 1004 (LSLQ…ESGK) and 1314 to 1335 (LAKKESSRLQKTGHRVTYSPRK). Residues 920-930 (PEERSDSDVNN) show a composition bias toward basic and acidic residues. The span at 933–949 (STSSVDSDILSSSHSSD) shows a compositional bias: low complexity. The span at 977-986 (KANDGKKETW) shows a compositional bias: basic and acidic residues. A compositionally biased stretch (acidic residues) spans 987-1000 (DTAEEDSGTDSEYD).

Belongs to the peptidase C19 family. USP47 subfamily.

Its subcellular location is the cytoplasm. The enzyme catalyses Thiol-dependent hydrolysis of ester, thioester, amide, peptide and isopeptide bonds formed by the C-terminal Gly of ubiquitin (a 76-residue protein attached to proteins as an intracellular targeting signal).. In terms of biological role, ubiquitin-specific protease that specifically deubiquitinates monoubiquitinated DNA polymerase beta (polb), stabilizing polb thereby playing a role in base-excision repair (BER). The sequence is that of Ubiquitin carboxyl-terminal hydrolase 47 (usp47) from Xenopus tropicalis (Western clawed frog).